The chain runs to 144 residues: UPF0299 membrane protein MS1271 (144 aa).

Transmembrane regions (helical) follow at residues 5-25 (IFLF…GEGI), 28-48 (LIPI…IGLT), 57-77 (VFFG…PVSV), and 92-112 (SLLI…GFLG).

Belongs to the UPF0299 family.

The protein localises to the cell inner membrane. The sequence is that of UPF0299 membrane protein MS1271 from Mannheimia succiniciproducens (strain KCTC 0769BP / MBEL55E).